A 220-amino-acid chain; its full sequence is Ribosomal RNA small subunit methyltransferase G (220 aa).

Residues G82, L87, 137–138 (VE), and R152 contribute to the S-adenosyl-L-methionine site.

Belongs to the methyltransferase superfamily. RNA methyltransferase RsmG family.

Its subcellular location is the cytoplasm. The enzyme catalyses guanosine(527) in 16S rRNA + S-adenosyl-L-methionine = N(7)-methylguanosine(527) in 16S rRNA + S-adenosyl-L-homocysteine. Its function is as follows. Specifically methylates the N7 position of guanine in position 527 of 16S rRNA. The polypeptide is Ribosomal RNA small subunit methyltransferase G (Janthinobacterium sp. (strain Marseille) (Minibacterium massiliensis)).